We begin with the raw amino-acid sequence, 304 residues long: Acetaldehyde dehydrogenase 4 (304 aa).

Cys131 functions as the Acyl-thioester intermediate in the catalytic mechanism. Residues 162–170 (SAGPGTRKN) and Asn273 contribute to the NAD(+) site.

This sequence belongs to the acetaldehyde dehydrogenase family.

It catalyses the reaction acetaldehyde + NAD(+) + CoA = acetyl-CoA + NADH + H(+). The polypeptide is Acetaldehyde dehydrogenase 4 (Dechloromonas aromatica (strain RCB)).